The primary structure comprises 445 residues: MKHFEANFDGLVGPTHNYAGLSFGNVASFSNASAVSDPKSAAKQGLKKAKALADMGMVQGMLAPQERPDLHTLRRIGFSGTDAEILNKAAKEAPALLRACCSASSMWTANAATVSPSADTQDGKLHFTPANLVDKLHRSIEPVTTGNILAATFNNSRHFSHHQHLPEHSSFGDEGAANHTRLCENYGNAGVELFVYGQEATNPNAPKPQKYPARQTLEASQAIARLHGLSEENTVYLSQNPDVIDQGVFHNDVIAVGNQNVLFYHQQAFLDTQNKFDEIQQKFGDSKVHFIEVPTAKVSIEDAVKSYLFNTQIITLPSGEMAIIAPTNCQENPAVFAYLNELVTLGTPIKQVNYFDVKQSMQNGGGPACLRLRVAMNDMELAAVNQNTLMNDALFTRLNAWVDKHYRDRLSVDDLADPQLIIESRTALDELTQIMKLGSVYQFQK.

Substrate contacts are provided by residues 19–28 (AGLSFGNVAS), N110, and 137–138 (HR). E174 is a catalytic residue. R214 is a substrate binding site. H250 is an active-site residue. Residues D252 and N363 each coordinate substrate. Catalysis depends on C369, which acts as the Nucleophile.

This sequence belongs to the succinylarginine dihydrolase family. Homodimer.

It catalyses the reaction N(2)-succinyl-L-arginine + 2 H2O + 2 H(+) = N(2)-succinyl-L-ornithine + 2 NH4(+) + CO2. It participates in amino-acid degradation; L-arginine degradation via AST pathway; L-glutamate and succinate from L-arginine: step 2/5. In terms of biological role, catalyzes the hydrolysis of N(2)-succinylarginine into N(2)-succinylornithine, ammonia and CO(2). This is N-succinylarginine dihydrolase from Shewanella woodyi (strain ATCC 51908 / MS32).